The chain runs to 90 residues: UPF0729 protein Bm1_03610 (90 aa).

The protein belongs to the UPF0729 family.

In Brugia malayi (Filarial nematode worm), this protein is UPF0729 protein Bm1_03610.